The chain runs to 144 residues: Large ribosomal subunit protein uL15 (144 aa).

The segment at 1–49 (MRLNTLSPAAGAKSAAKRVGRGIGSGLGKTAGRGHKGQKSRSGGGVRVG) is disordered. Residues 21–31 (RGIGSGLGKTA) show a composition bias toward gly residues.

This sequence belongs to the universal ribosomal protein uL15 family. In terms of assembly, part of the 50S ribosomal subunit.

Its function is as follows. Binds to the 23S rRNA. The sequence is that of Large ribosomal subunit protein uL15 from Shewanella piezotolerans (strain WP3 / JCM 13877).